Here is a 403-residue protein sequence, read N- to C-terminus: Glucosyl-3-phosphoglycerate synthase (403 aa).

An a divalent metal cation-binding site is contributed by Asp150. Residue Gly189–Thr192 participates in (2R)-3-phosphoglycerate binding. His273 contacts a divalent metal cation.

This sequence belongs to the glycosyltransferase 2 family. Homodimer. Mn(2+) is required as a cofactor. Co(2+) serves as cofactor. It depends on Mg(2+) as a cofactor. The cofactor is Ni(2+).

The enzyme catalyses an NDP-alpha-D-glucose + (2R)-3-phosphoglycerate = (2R)-2-O-(alpha-D-glucopyranosyl)-3-phospho-glycerate + a ribonucleoside 5'-diphosphate + H(+). In terms of biological role, involved in the biosynthesis of 6-O-methylglucose lipopolysaccarides (MGLPs). Catalyzes the transfer of a glucose (Glc) moiety from uridine diphosphate (UDP-Glc) to the position 2 of 3-phospho-D-glycerate (3-PGA) to form glucosyl-3-phosphoglycerate (GPG). GpgS is most active with UDP-glucose, followed by GDP-glucose, ADP-glucose, and to a lesser extent, TDP-glucose. 3-PGA is the only acceptor for these glucosyl donors. The sequence is that of Glucosyl-3-phosphoglycerate synthase from Persephonella marina (strain DSM 14350 / EX-H1).